A 571-amino-acid polypeptide reads, in one-letter code: Kelch-like protein 28 (571 aa).

One can recognise a BTB domain in the interval 35–102 (CDIILRVGDV…AYTGTVFISQ (68 aa)). 6 Kelch repeats span residues 284–331 (VLCA…VLDQ), 332–386 (KVFV…VLAG), 387–433 (EVFA…VLDG), 435–479 (LYAI…VMLG), 480–526 (FIFV…VIDN), and 528–570 (LYVV…GLTA).

The protein is Kelch-like protein 28 (Klhl28) of Mus musculus (Mouse).